Consider the following 323-residue polypeptide: Beta-ketoacyl-[acyl-carrier-protein] synthase III (323 aa).

Catalysis depends on residues Cys-113 and His-250. Residues 251–255 (QANKR) form an ACP-binding region. The active site involves Asn-280.

This sequence belongs to the thiolase-like superfamily. FabH family. In terms of assembly, homodimer.

Its subcellular location is the cytoplasm. The enzyme catalyses malonyl-[ACP] + acetyl-CoA + H(+) = 3-oxobutanoyl-[ACP] + CO2 + CoA. Its pathway is lipid metabolism; fatty acid biosynthesis. Its function is as follows. Catalyzes the condensation reaction of fatty acid synthesis by the addition to an acyl acceptor of two carbons from malonyl-ACP. Catalyzes the first condensation reaction which initiates fatty acid synthesis and may therefore play a role in governing the total rate of fatty acid production. Possesses both acetoacetyl-ACP synthase and acetyl transacylase activities. Its substrate specificity determines the biosynthesis of branched-chain and/or straight-chain of fatty acids. The chain is Beta-ketoacyl-[acyl-carrier-protein] synthase III from Brucella melitensis biotype 2 (strain ATCC 23457).